The following is a 505-amino-acid chain: Transcription factor VHR2 (505 aa).

Positions 1 to 16 are enriched in basic and acidic residues; that stretch reads MIDDTENSKIHLEGSH. 3 disordered regions span residues 1 to 23, 105 to 179, and 421 to 460; these read MIDD…KYTG, NRKR…LPYP, and QSNP…STSA. The segment covering 133 to 148 has biased composition (low complexity); the sequence is PSSSNMGSCSASNASS. A compositionally biased stretch (polar residues) spans 421 to 443; it reads QSNPMRPHSTSEVLSAHSSTKDA.

This sequence belongs to the VHR1 family.

The protein resides in the nucleus. Transcription factor that regulates ERG9, but seems to have a more global function in transcription. The sequence is that of Transcription factor VHR2 (VHR2) from Saccharomyces cerevisiae (strain ATCC 204508 / S288c) (Baker's yeast).